The following is a 249-amino-acid chain: tRNA (guanine-N(1)-)-methyltransferase (249 aa).

S-adenosyl-L-methionine is bound by residues Gly113 and 133 to 138 (IGDFVL).

This sequence belongs to the RNA methyltransferase TrmD family. In terms of assembly, homodimer.

Its subcellular location is the cytoplasm. It carries out the reaction guanosine(37) in tRNA + S-adenosyl-L-methionine = N(1)-methylguanosine(37) in tRNA + S-adenosyl-L-homocysteine + H(+). Its function is as follows. Specifically methylates guanosine-37 in various tRNAs. This chain is tRNA (guanine-N(1)-)-methyltransferase, found in Aliivibrio fischeri (strain ATCC 700601 / ES114) (Vibrio fischeri).